A 218-amino-acid polypeptide reads, in one-letter code: Glutathione S-transferase Mu 1 (218 aa).

Positions 2–88 (PMILGYWNVR…YLARKHHLCG (87 aa)) constitute a GST N-terminal domain. Residues 7–8 (YW), 43–46 (RSQW), Lys50, and 59–60 (NL) each bind glutathione. Ser67 is modified (phosphoserine). A glutathione-binding site is contributed by 72–73 (QS). Residues 90–208 (TEEERIRADI…KSSRYLSTPI (119 aa)) enclose the GST C-terminal domain. Tyr116 provides a ligand contact to substrate. A phosphoserine mark is found at Ser205 and Ser210.

This sequence belongs to the GST superfamily. Mu family. In terms of assembly, homodimer or heterodimer.

Its subcellular location is the cytoplasm. The catalysed reaction is RX + glutathione = an S-substituted glutathione + a halide anion + H(+). The enzyme catalyses prostaglandin A2 + glutathione = prostaglandin A2-S-(R)-glutathione. It catalyses the reaction prostaglandin J2 + glutathione = prostaglandin J2-S-(R)-glutathione. It carries out the reaction prostaglandin J2 + glutathione = prostaglandin J2-S-(S)-glutathione. The catalysed reaction is prostaglandin A2 + glutathione = prostaglandin A2-S-(S)-glutathione. The enzyme catalyses 11(S)-hydroxy-14(S),15(S)-epoxy-(5Z,8Z,12E)-eicosatrienoate + glutathione = (11S,15S)-dihydroxy-14(R)-S-glutathionyl-(5Z,8Z,12E)-eicosatrienoate. Its function is as follows. Conjugation of reduced glutathione to a wide number of exogenous and endogenous hydrophobic electrophiles. The olfactory GST may be crucial for the acuity of the olfactory process. Participates in the formation of novel hepoxilin regioisomers. The polypeptide is Glutathione S-transferase Mu 1 (Rattus norvegicus (Rat)).